We begin with the raw amino-acid sequence, 503 residues long: V-type proton ATPase subunit B (503 aa).

Arginine 378 serves as a coordination point for ATP. 4 positions are modified to phosphoserine: serine 491, serine 492, serine 502, and serine 503.

Belongs to the ATPase alpha/beta chains family. As to quaternary structure, V-ATPase is a heteromultimeric enzyme composed of a peripheral catalytic V1 complex (components A to H) attached to an integral membrane V0 proton pore complex (components: a, c, c', c'', d, e, f and VOA1). Interacts with rav1.

It localises to the vacuole membrane. Non-catalytic subunit of the V1 complex of vacuolar(H+)-ATPase (V-ATPase), a multisubunit enzyme composed of a peripheral complex (V1) that hydrolyzes ATP and a membrane integral complex (V0) that translocates protons. V-ATPase is responsible for acidifying and maintaining the pH of intracellular compartments. This chain is V-type proton ATPase subunit B, found in Schizosaccharomyces pombe (strain 972 / ATCC 24843) (Fission yeast).